Reading from the N-terminus, the 213-residue chain is LIM domain-containing protein PLIM2c (213 aa).

LIM zinc-binding domains follow at residues 9–69 (DKCK…LFKE) and 105–165 (DKCA…LFLE). The tract at residues 177 to 213 (ANHRRSTAEEDKTEPKEDEANPTEEETSDAAAEEHES) is disordered. Positions 182-195 (STAEEDKTEPKEDE) are enriched in basic and acidic residues.

As to quaternary structure, interacts with F-actin. Exclusively expressed in pollen grains.

The protein resides in the cytoplasm. The protein localises to the cytoskeleton. Binds to actin filaments and promotes cross-linking into thick bundles. Has an actin-stabilizing activity. Associates predominantly with long and dynamic actin bundles in the shank of growing pollen tubes. The actin regulatory activities are inhibited by pH &gt; 6.8 and/or high [Ca(2+)]. This chain is LIM domain-containing protein PLIM2c, found in Arabidopsis thaliana (Mouse-ear cress).